The chain runs to 555 residues: F-box only protein 33 (555 aa).

Residues 65–111 form the F-box domain; sequence AAGAASLPSELIVHIFSFLPAPDRLRASASCSHWRECLFYPALWPQL.

Part of the SCF (SKP1-CUL1-F-box) E3 ubiquitin-protein ligase complex SCF(FBXO33) formed of CUL1, SKP1, RBX1 and FBXO33. Interacts via its N-terminus with YBX1 CSD domain. Directly interacts with SKP1 and CUL1.

It participates in protein modification; protein ubiquitination. Substrate recognition component of a SCF (SKP1-CUL1-F-box protein) E3 ubiquitin-protein ligase complex which mediates the ubiquitination and subsequent proteasomal degradation of target proteins. Probably recognizes and binds to phosphorylated target proteins. Recognizes YBX1. The polypeptide is F-box only protein 33 (FBXO33) (Homo sapiens (Human)).